Reading from the N-terminus, the 125-residue chain is Large ribosomal subunit protein bL12 (125 aa).

Belongs to the bacterial ribosomal protein bL12 family. As to quaternary structure, homodimer. Part of the ribosomal stalk of the 50S ribosomal subunit. Forms a multimeric L10(L12)X complex, where L10 forms an elongated spine to which 2 to 4 L12 dimers bind in a sequential fashion. Binds GTP-bound translation factors.

Functionally, forms part of the ribosomal stalk which helps the ribosome interact with GTP-bound translation factors. Is thus essential for accurate translation. The polypeptide is Large ribosomal subunit protein bL12 (Polaromonas naphthalenivorans (strain CJ2)).